Here is a 132-residue protein sequence, read N- to C-terminus: Small ribosomal subunit protein uS9 (132 aa).

This sequence belongs to the universal ribosomal protein uS9 family.

This Baumannia cicadellinicola subsp. Homalodisca coagulata protein is Small ribosomal subunit protein uS9.